The sequence spans 376 residues: Probable low-specificity L-threonine aldolase (376 aa).

Residues 1–21 are compositionally biased toward polar residues; that stretch reads MSGSVTSTTTETRLCPSNQGS. The interval 1–22 is disordered; sequence MSGSVTSTTTETRLCPSNQGSA. Position 226 is an N6-(pyridoxal phosphate)lysine (Lys-226).

Belongs to the threonine aldolase family. Homotetramer. Requires pyridoxal 5'-phosphate as cofactor.

The enzyme catalyses L-threonine = acetaldehyde + glycine. The catalysed reaction is L-allo-threonine = acetaldehyde + glycine. It functions in the pathway amino-acid degradation; L-threonine degradation via aldolase pathway; acetaldehyde and glycine from L-threonine: step 1/1. The protein is Probable low-specificity L-threonine aldolase (gly1) of Schizosaccharomyces pombe (strain 972 / ATCC 24843) (Fission yeast).